The chain runs to 415 residues: Serine hydroxymethyltransferase (415 aa).

(6S)-5,6,7,8-tetrahydrofolate-binding positions include Leu-118 and 122-124 (GHL). At Lys-227 the chain carries N6-(pyridoxal phosphate)lysine.

Belongs to the SHMT family. In terms of assembly, homodimer. Pyridoxal 5'-phosphate serves as cofactor.

The protein localises to the cytoplasm. It catalyses the reaction (6R)-5,10-methylene-5,6,7,8-tetrahydrofolate + glycine + H2O = (6S)-5,6,7,8-tetrahydrofolate + L-serine. It functions in the pathway one-carbon metabolism; tetrahydrofolate interconversion. The protein operates within amino-acid biosynthesis; glycine biosynthesis; glycine from L-serine: step 1/1. Catalyzes the reversible interconversion of serine and glycine with tetrahydrofolate (THF) serving as the one-carbon carrier. This reaction serves as the major source of one-carbon groups required for the biosynthesis of purines, thymidylate, methionine, and other important biomolecules. Also exhibits THF-independent aldolase activity toward beta-hydroxyamino acids, producing glycine and aldehydes, via a retro-aldol mechanism. The protein is Serine hydroxymethyltransferase of Elusimicrobium minutum (strain Pei191).